Here is a 124-residue protein sequence, read N- to C-terminus: Putative ankyrin repeat protein RF_1087 (124 aa).

ANK repeat units follow at residues 17 to 46, 50 to 79, and 83 to 112; these read NDQK…NPNI, NGET…IIDS, and FERT…TIGN.

The polypeptide is Putative ankyrin repeat protein RF_1087 (Rickettsia felis (strain ATCC VR-1525 / URRWXCal2) (Rickettsia azadi)).